The chain runs to 146 residues: uncharacterized protein (146 aa).

Residues 119–128 (AQADLEHEES) show a composition bias toward basic and acidic residues. The tract at residues 119-146 (AQADLEHEESASIDQDEMVAIETRKTKK) is disordered.

This is an uncharacterized protein from Schizosaccharomyces pombe (strain 972 / ATCC 24843) (Fission yeast).